Here is a 298-residue protein sequence, read N- to C-terminus: uncharacterized protein (298 aa).

Helical transmembrane passes span 9–28 (GYVL…LYFK), 38–60 (IIVQ…WKHP), 72–94 (RFVV…VWAV), 104–121 (LGYY…MLLL), 128–145 (LQWL…QQVW), 150–167 (LPWV…YGLI), 174–196 (AALP…WLLF), 211–233 (PEAL…FNAA), 240–262 (ATLG…LLFG), and 272–291 (AFAF…WRSL). In terms of domain architecture, EamA spans 18-141 (VIWGLFPLYF…AVALASLGVA (124 aa)).

The protein belongs to the EamA transporter family.

It is found in the cell membrane. This is an uncharacterized protein from Pseudomonas aeruginosa (strain ATCC 15692 / DSM 22644 / CIP 104116 / JCM 14847 / LMG 12228 / 1C / PRS 101 / PAO1).